A 230-amino-acid chain; its full sequence is uncharacterized protein (230 aa).

The region spanning 2–230 (IQLSNVRKSY…ASSGQRSVGE (229 aa)) is the ABC transporter domain. 38 to 45 (GPSGSGKS) provides a ligand contact to ATP.

It belongs to the ABC transporter superfamily. Part of a complex composed of YknX, YknY and YknZ. The complex interacts with YknW.

Its subcellular location is the cell membrane. In terms of biological role, part of an unusual four-component transporter, which is required for protection against the killing factor SdpC (sporulation-delaying protein). This is an uncharacterized protein from Bacillus subtilis (strain 168).